We begin with the raw amino-acid sequence, 356 residues long: Peptide methionine sulfoxide reductase MsrA/MsrB (356 aa).

Residues His46 to Glu199 are peptide methionine sulfoxide reductase A. The active site involves Cys54. Positions Asp216–Leu339 constitute a MsrB domain. The Nucleophile role is filled by Cys328.

This sequence in the N-terminal section; belongs to the MsrA Met sulfoxide reductase family. The protein in the C-terminal section; belongs to the MsrB Met sulfoxide reductase family.

It carries out the reaction L-methionyl-[protein] + [thioredoxin]-disulfide + H2O = L-methionyl-(S)-S-oxide-[protein] + [thioredoxin]-dithiol. It catalyses the reaction [thioredoxin]-disulfide + L-methionine + H2O = L-methionine (S)-S-oxide + [thioredoxin]-dithiol. The enzyme catalyses L-methionyl-[protein] + [thioredoxin]-disulfide + H2O = L-methionyl-(R)-S-oxide-[protein] + [thioredoxin]-dithiol. In terms of biological role, has an important function as a repair enzyme for proteins that have been inactivated by oxidation. Catalyzes the reversible oxidation-reduction of methionine sulfoxide in proteins to methionine. This is Peptide methionine sulfoxide reductase MsrA/MsrB (msrAB) from Aggregatibacter actinomycetemcomitans (Actinobacillus actinomycetemcomitans).